Here is a 113-residue protein sequence, read N- to C-terminus: UPF0102 protein Ccon26_01140 (113 aa).

It belongs to the UPF0102 family.

The chain is UPF0102 protein Ccon26_01140 from Campylobacter concisus (strain 13826).